The chain runs to 287 residues: MKTKLQYYLPKMLITKFFGWLAEKKAGIITYWIILFFIKIYKINLKEIKTKDIKSYNTFNDFFSRRIKIDCRRIDYDPSIIICPADGIITNFGYIENTEKLQLKNHNYTLKSLLAQNETMIDIFQHGIFFTTYLSPKNYHRIHMPCDGSLIKMIYVPGQLFSVNLKFYKNISNIFSKNERVICLFKTNFGYMIQILVGSIISGTISTSWYGKINYKRDGIIKLWKYNINSNNKPIFLKKGDEMGFFTLGSTVITLFSKKNILIKENLSNYKEVRVGDVLAYGIQNVK.

Catalysis depends on charge relay system; for autoendoproteolytic cleavage activity residues Asp-86, His-143, and Ser-250. The active-site Schiff-base intermediate with substrate; via pyruvic acid; for decarboxylase activity is Ser-250. Ser-250 is modified (pyruvic acid (Ser); by autocatalysis).

Belongs to the phosphatidylserine decarboxylase family. PSD-B subfamily. Prokaryotic type I sub-subfamily. As to quaternary structure, heterodimer of a large membrane-associated beta subunit and a small pyruvoyl-containing alpha subunit. Requires pyruvate as cofactor. In terms of processing, is synthesized initially as an inactive proenzyme. Formation of the active enzyme involves a self-maturation process in which the active site pyruvoyl group is generated from an internal serine residue via an autocatalytic post-translational modification. Two non-identical subunits are generated from the proenzyme in this reaction, and the pyruvate is formed at the N-terminus of the alpha chain, which is derived from the carboxyl end of the proenzyme. The autoendoproteolytic cleavage occurs by a canonical serine protease mechanism, in which the side chain hydroxyl group of the serine supplies its oxygen atom to form the C-terminus of the beta chain, while the remainder of the serine residue undergoes an oxidative deamination to produce ammonia and the pyruvoyl prosthetic group on the alpha chain. During this reaction, the Ser that is part of the protease active site of the proenzyme becomes the pyruvoyl prosthetic group, which constitutes an essential element of the active site of the mature decarboxylase.

The protein localises to the cell membrane. It carries out the reaction a 1,2-diacyl-sn-glycero-3-phospho-L-serine + H(+) = a 1,2-diacyl-sn-glycero-3-phosphoethanolamine + CO2. The protein operates within phospholipid metabolism; phosphatidylethanolamine biosynthesis; phosphatidylethanolamine from CDP-diacylglycerol: step 2/2. In terms of biological role, catalyzes the formation of phosphatidylethanolamine (PtdEtn) from phosphatidylserine (PtdSer). The polypeptide is Phosphatidylserine decarboxylase proenzyme (Wigglesworthia glossinidia brevipalpis).